The primary structure comprises 455 residues: ATP-dependent protease ATPase subunit HslU (455 aa).

ATP contacts are provided by residues valine 23, 65–70, aspartate 266, glutamate 333, and arginine 405; that span reads GVGKTE.

The protein belongs to the ClpX chaperone family. HslU subfamily. In terms of assembly, a double ring-shaped homohexamer of HslV is capped on each side by a ring-shaped HslU homohexamer. The assembly of the HslU/HslV complex is dependent on binding of ATP.

The protein resides in the cytoplasm. Its function is as follows. ATPase subunit of a proteasome-like degradation complex; this subunit has chaperone activity. The binding of ATP and its subsequent hydrolysis by HslU are essential for unfolding of protein substrates subsequently hydrolyzed by HslV. HslU recognizes the N-terminal part of its protein substrates and unfolds these before they are guided to HslV for hydrolysis. The polypeptide is ATP-dependent protease ATPase subunit HslU (Xanthomonas euvesicatoria pv. vesicatoria (strain 85-10) (Xanthomonas campestris pv. vesicatoria)).